The sequence spans 249 residues: 2,3-bisphosphoglycerate-dependent phosphoglycerate mutase (249 aa).

Residues arginine 8–asparagine 15, threonine 21–glycine 22, arginine 60, glutamate 87–tyrosine 90, lysine 98, arginine 114–arginine 115, and glycine 183–asparagine 184 each bind substrate. Histidine 9 (tele-phosphohistidine intermediate) is an active-site residue. Glutamate 87 serves as the catalytic Proton donor/acceptor.

This sequence belongs to the phosphoglycerate mutase family. BPG-dependent PGAM subfamily.

The catalysed reaction is (2R)-2-phosphoglycerate = (2R)-3-phosphoglycerate. The protein operates within carbohydrate degradation; glycolysis; pyruvate from D-glyceraldehyde 3-phosphate: step 3/5. In terms of biological role, catalyzes the interconversion of 2-phosphoglycerate and 3-phosphoglycerate. The sequence is that of 2,3-bisphosphoglycerate-dependent phosphoglycerate mutase from Methanosphaerula palustris (strain ATCC BAA-1556 / DSM 19958 / E1-9c).